We begin with the raw amino-acid sequence, 212 residues long: Protein GrpE (212 aa).

A disordered region spans residues 1-69; the sequence is MAEMSNNKTS…LESAKKEIES (69 aa). The segment covering 40-60 has biased composition (low complexity); sequence ETTQTESMETAETETSLQTEL.

The protein belongs to the GrpE family. As to quaternary structure, homodimer.

The protein resides in the cytoplasm. Functionally, participates actively in the response to hyperosmotic and heat shock by preventing the aggregation of stress-denatured proteins, in association with DnaK and GrpE. It is the nucleotide exchange factor for DnaK and may function as a thermosensor. Unfolded proteins bind initially to DnaJ; upon interaction with the DnaJ-bound protein, DnaK hydrolyzes its bound ATP, resulting in the formation of a stable complex. GrpE releases ADP from DnaK; ATP binding to DnaK triggers the release of the substrate protein, thus completing the reaction cycle. Several rounds of ATP-dependent interactions between DnaJ, DnaK and GrpE are required for fully efficient folding. The polypeptide is Protein GrpE (Leptospira interrogans serogroup Icterohaemorrhagiae serovar Lai (strain 56601)).